A 1235-amino-acid chain; its full sequence is Major DNA-binding protein (1235 aa).

The segment at 536-584 (GGLDGKGDDGVPGGGAGGGGGRDVSGGPSDGLGGGRGGGGGGDSGGMMG) is disordered. Gly residues predominate over residues 545 to 584 (GVPGGGAGGGGGRDVSGGPSDGLGGGRGGGGGGDSGGMMG). The short motif at 846–847 (FW) is the Required for filament formation element. The segment covering 1214–1226 (GVGGSSGGGGGSG) has biased composition (gly residues). The tract at residues 1214–1235 (GVGGSSGGGGGSGLLPAKRSRL) is disordered. Residues 1232 to 1235 (RSRL) are required for nuclear localization.

This sequence belongs to the herpesviridae major DNA-binding protein family. In terms of assembly, homooligomers. Forms double-helical filaments necessary for the formation of replication compartments within the host nucleus. Interacts with the origin-binding protein. Interacts with the helicase primase complex; this interaction stimulates primer synthesis activity of the helicase-primase complex. Interacts with the DNA polymerase. Interacts with the alkaline exonuclease; this interaction increases its nuclease processivity.

It is found in the host nucleus. Functionally, plays several crucial roles in viral infection. Participates in the opening of the viral DNA origin to initiate replication by interacting with the origin-binding protein. May disrupt loops, hairpins and other secondary structures present on ssDNA to reduce and eliminate pausing of viral DNA polymerase at specific sites during elongation. Promotes viral DNA recombination by performing strand-transfer, characterized by the ability to transfer a DNA strand from a linear duplex to a complementary single-stranded DNA circle. Can also catalyze the renaturation of complementary single strands. Additionally, reorganizes the host cell nucleus, leading to the formation of prereplicative sites and replication compartments. This process is driven by the protein which can form double-helical filaments in the absence of DNA. This chain is Major DNA-binding protein, found in Homo sapiens (Human).